The primary structure comprises 339 residues: 7,8-didemethyl-8-hydroxy-5-deazariboflavin synthase (339 aa).

A Radical SAM core domain is found at 25-256; the sequence is ATYSPAYTIV…PDITIQIPPN (232 aa). Cysteine 39, cysteine 43, and cysteine 46 together coordinate [4Fe-4S] cluster.

It belongs to the radical SAM superfamily. CofG family. Consists of two subunits, CofG and CofH. [4Fe-4S] cluster is required as a cofactor.

It catalyses the reaction 5-amino-5-(4-hydroxybenzyl)-6-(D-ribitylimino)-5,6-dihydrouracil + S-adenosyl-L-methionine = 7,8-didemethyl-8-hydroxy-5-deazariboflavin + 5'-deoxyadenosine + L-methionine + NH4(+) + H(+). The protein operates within cofactor biosynthesis; coenzyme F0 biosynthesis. Functionally, catalyzes the radical-mediated synthesis of 7,8-didemethyl-8-hydroxy-5-deazariboflavin from 5-amino-5-(4-hydroxybenzyl)-6-(D-ribitylimino)-5,6-dihydrouracil. The chain is 7,8-didemethyl-8-hydroxy-5-deazariboflavin synthase from Nostoc sp. (strain PCC 7120 / SAG 25.82 / UTEX 2576).